The sequence spans 207 residues: Ribonuclease HII (207 aa).

In terms of domain architecture, RNase H type-2 spans 12–201 (DLVAGVDEVG…VRAAWEAREG (190 aa)). 3 residues coordinate a divalent metal cation: aspartate 18, glutamate 19, and aspartate 110.

This sequence belongs to the RNase HII family. Mn(2+) is required as a cofactor. Requires Mg(2+) as cofactor.

It localises to the cytoplasm. It catalyses the reaction Endonucleolytic cleavage to 5'-phosphomonoester.. In terms of biological role, endonuclease that specifically degrades the RNA of RNA-DNA hybrids. The polypeptide is Ribonuclease HII (Pseudomonas putida (strain GB-1)).